Consider the following 155-residue polypeptide: FUN14 domain-containing protein 1 (155 aa).

At 1-47 (MATRNPPPQDYESDDDSYEVLDLTEYARRHQWWNRVFGHSSGPMVEK) the chain is on the cytoplasmic side. Serine 13 is subject to Phosphoserine; by CK2. At serine 17 the chain carries Phosphoserine; by ULK1. Tyrosine 18 carries the phosphotyrosine; by SRC modification. The short motif at 18-21 (YEVL) is the YXXL element. The chain crosses the membrane as a helical span at residues 48–68 (YSVATQIVMGGVTGWCAGFLF). The Mitochondrial intermembrane segment spans residues 69-74 (QKVGKL). The helical transmembrane segment at 75-95 (AATAVGGGFLLLQIASHSGYV) threads the bilayer. At 96 to 133 (QIDWKRVEKDVNKAKRQIKKRANKAAPEINNLIEEATE) the chain is on the cytoplasmic side. Residue lysine 119 forms a Glycyl lysine isopeptide (Lys-Gly) (interchain with G-Cter in ubiquitin) linkage. Residues 134 to 154 (FIKQNIVISSGFVGGFLLGLA) traverse the membrane as a helical segment. Residue serine 155 is a topological domain, mitochondrial intermembrane.

The protein belongs to the FUN14 family. Interacts (via YXXL motif) with MAP1 LC3 family proteins MAP1LC3A, MAP1LC3B and GABARAP. Interacts with DNM1L/DPR1. Interacts with GPX4. Phosphorylation at Ser-13 by CK2 and at Tyr-18 by SRC inhibits activation of mitophagy. Following hypoxia, dephosphorylated at Tyr-18, leading to interaction with MAP1 LC3 family proteins and triggering mitophagy. Dephosphorylation is mediated by PGAM5. Phosphorylated by ULK1 at Ser-17 which enhances FUNDC1 binding to LC3. Post-translationally, ubiquitinated on Lys-119. Deubiquitinated by USP19; leading to hypoxia-induced DRP1 oligomerization and GTPase activity. As to expression, widely expressed.

It is found in the mitochondrion outer membrane. Its function is as follows. Integral mitochondrial outer-membrane protein that mediates the formation of mitochondria-associated endoplasmic reticulum membranes (MAMs). In turn, mediates angiogenesis and neoangiogenesis through interference with intracellular Ca(2+) communication and regulation of the vascular endothelial growth factor receptor KDR/VEGFR2 expression at both mRNA and protein levels. Also acts as an activator of hypoxia-induced mitophagy, an important mechanism for mitochondrial quality and homeostasis, by interacting with and recruiting LC3 protein family to mitochondria. Mechanistically, recruits DRP1 at ER-mitochondria contact sites leading to DRP1 oligomerization and GTPase activity to facilitate mitochondrial fission during hypoxia. Additionally, plays a role in hepatic ferroptosis by interacting directly with glutathione peroxidase/GPX4 to facilitate its recruitment into mitochondria through TOM/TIM complex where it is degraded by mitophagy. This is FUN14 domain-containing protein 1 (FUNDC1) from Homo sapiens (Human).